The following is a 257-amino-acid chain: 1-(5-phosphoribosyl)-5-[(5-phosphoribosylamino)methylideneamino] imidazole-4-carboxamide isomerase (257 aa).

Asp8 (proton acceptor) is an active-site residue. The Proton donor role is filled by Asp129.

It belongs to the HisA/HisF family.

The protein localises to the cytoplasm. It carries out the reaction 1-(5-phospho-beta-D-ribosyl)-5-[(5-phospho-beta-D-ribosylamino)methylideneamino]imidazole-4-carboxamide = 5-[(5-phospho-1-deoxy-D-ribulos-1-ylimino)methylamino]-1-(5-phospho-beta-D-ribosyl)imidazole-4-carboxamide. It functions in the pathway amino-acid biosynthesis; L-histidine biosynthesis; L-histidine from 5-phospho-alpha-D-ribose 1-diphosphate: step 4/9. The polypeptide is 1-(5-phosphoribosyl)-5-[(5-phosphoribosylamino)methylideneamino] imidazole-4-carboxamide isomerase (Thermosynechococcus vestitus (strain NIES-2133 / IAM M-273 / BP-1)).